A 131-amino-acid polypeptide reads, in one-letter code: Large ribosomal subunit protein eL32 (131 aa).

Belongs to the eukaryotic ribosomal protein eL32 family.

This Eremothecium gossypii (strain ATCC 10895 / CBS 109.51 / FGSC 9923 / NRRL Y-1056) (Yeast) protein is Large ribosomal subunit protein eL32 (RPL32).